The chain runs to 272 residues: Undecaprenyl-diphosphatase (272 aa).

7 consecutive transmembrane segments (helical) span residues 22–42 (FLPVSSTGHMIIVGHMLGFTG), 45–65 (AETFEVIIQLGSILAVVVVFW), 92–112 (SHIILAMLPAVTLGLMFHDVI), 118–138 (PQSVMYALVIGGVLLITAEIL), 189–209 (YTASEFSFILAVPMMMGASGL), 228–248 (VGFVTAFVVALVAIKTFLALI), and 251–271 (ISFIPFAIYRFIVAAAVYWVF).

It belongs to the UppP family.

The protein localises to the cell inner membrane. The enzyme catalyses di-trans,octa-cis-undecaprenyl diphosphate + H2O = di-trans,octa-cis-undecaprenyl phosphate + phosphate + H(+). Functionally, catalyzes the dephosphorylation of undecaprenyl diphosphate (UPP). Confers resistance to bacitracin. The polypeptide is Undecaprenyl-diphosphatase (Photorhabdus laumondii subsp. laumondii (strain DSM 15139 / CIP 105565 / TT01) (Photorhabdus luminescens subsp. laumondii)).